A 995-amino-acid chain; its full sequence is MSEQERIQDCLRKEIRSLLISTKDGLTPQQLEKEYLLMVGNHLPLRILGYRSTMELVLDMPDVVSVCPCGDGTVILKAIPDESTKGIASLVAKQRRSHKVRNSMQKGRSSVCSGRVPYRGRVPPILPAVVKSELKDLLALSPVLLSDFEKAFARRFGRSFQYMQYGFLSMFEVLSAASDVICVEQTRAGSLLTLKKSASEEKQREWPAGKIFTQPFRMKQQGSYSTGFPVTKTRFSQPISNMEPPKQVLSMEKIPMFNTVEASRLSHTEKLNQLESTFKSVIAQIGPGGTVDPDLKHKIKFVVSKFPQGLFISKLLGEFELVFKEQLSPKQLGFLNVTELVGALSDILRVEFSEEKQDLLVFDADLRPLLPAGPLSSVRNSCLVQPDKRIEANAWASSPSRNSLSTVAVKKTTWDCPLKNHKEAEQKAYKKPNLVVKPLQLQVETNKSQLSLSMANHDIPPDAVRAKKLCRLPPLDTSTLVGVFVEYIISPSQFYVRIYSRDSSELLEDMMIEMRRCYSNQLVSDRYVMPEYFIQPGHLCCVRISEDKWWYRVIIHRILGKKEVEVFYPDFGNIGTVQKSSLRFLKCCYTKLPAQAIPCSLAWVRPAEEHWTSKAILHFQKLCGLKPLVGVVDEYIDGILNIFLCDTSSNEDVYFHHVLRTEGHAIVCRENAPSKGFRDFNPPALYTNSSAAPGDMVLTELGHPAQQHYLNEDGEILQQPQQDINDEKSISHLKSVSEELLKDSKLGPLKTRESCEEEPQWSILKPKDPKEENEDEVPTGMPCLESVTIGDDIWDENWLPLQAKMGKAGGPASHLFTSSLVGKKQYQTRGETTRKDWCFSTSKDIWDDSWQPLGLANDVKGRTHTPEGPIAQEKNIGTTRIRKQPDLQYPLDSSTLPKLEEFYISLIKSQQSAEGSQSEPASIQTPLKPGQASSTAPSSTPAAGDSPENHSGSAPDFSEALHSSKYSHGCLGSSCAVSHVQEPPALVPQCERREA.

3 consecutive HTH OST-type domains span residues 7 to 80, 122 to 197, and 291 to 365; these read IQDC…KAIP, VPPI…LKKS, and VDPD…FDAD. The region spanning 533–592 is the Tudor domain; that stretch reads FIQPGHLCCVRISEDKWWYRVIIHRILGKKEVEVFYPDFGNIGTVQKSSLRFLKCCYTKL. Disordered stretches follow at residues 747–781, 857–892, and 911–960; these read GPLKTRESCEEEPQWSILKPKDPKEENEDEVPTGM, NDVKGRTHTPEGPIAQEKNIGTTRIRKQPDLQYPLD, and QSAE…FSEA. Positions 911-925 are enriched in polar residues; that stretch reads QSAEGSQSEPASIQT. The span at 932–943 shows a compositional bias: low complexity; sequence ASSTAPSSTPAA. The residue at position 946 (serine 946) is a Phosphoserine.

This sequence belongs to the TDRD5 family.

The protein localises to the cytoplasm. Its function is as follows. Required during spermiogenesis to participate in the repression transposable elements and prevent their mobilization, which is essential for the germline integrity. Probably acts via the piRNA metabolic process, which mediates the repression of transposable elements during meiosis by forming complexes composed of piRNAs and Piwi proteins and govern the methylation and subsequent repression of transposons. Required for chromatoid body (CB) assembly. This is Tudor domain-containing protein 5 (Tdrd5) from Rattus norvegicus (Rat).